A 213-amino-acid chain; its full sequence is MSVEEVSKKFEENVSVDDTTATPKTVLSDSAHFDVKHPLNTKWTLWYTKPAVDKSESWSDLLRPVTSFQTVEEFWAIIQNIPEPHELPLKSDYHVFRNDVRPEWEDEANAKGGKWSFQLRGKGADIDELWLRTLLAVIGETIDEDDSQINGVVLSIRKGGNKFALWTKSEDKEPLLRIGGKFKQVLKLTDDGHLEFFPHSSANGRHPQPSITL.

Phosphoserine; by CK2 occurs at positions 2 and 15. Residue Thr22 is modified to Phosphothreonine. Ser28 and Ser30 each carry phosphoserine. Residue Lys114 forms a Glycyl lysine isopeptide (Lys-Gly) (interchain with G-Cter in ubiquitin) linkage.

It belongs to the eukaryotic initiation factor 4E family. In terms of assembly, component of the eIF4F complex, which composition varies with external and internal environmental conditions. It is composed of at least eIF4A (TIF1/TIF2), eIF4E (TIF45) and eIF4G (TIF4631 or TIF4632). Interacts with PAT1 in a RNA-dependent manner. eIF4E is also known to interact with other partners.

It is found in the cytoplasm. The protein localises to the nucleus. Its function is as follows. Recognizes and binds the 7-methylguanosine (m7G)-containing mRNA cap during an early step in the initiation of protein synthesis and facilitates ribosome binding by inducing the unwinding of the mRNAs secondary structures. The protein is Eukaryotic translation initiation factor 4E (CDC33) of Saccharomyces cerevisiae (strain ATCC 204508 / S288c) (Baker's yeast).